Consider the following 367-residue polypeptide: 15-cis-zeta-carotene isomerase, chloroplastic (367 aa).

The N-terminal 58 residues, Met1 to Arg58, are a transit peptide targeting the chloroplast. Transmembrane regions (helical) follow at residues Ser95–Ile115, Glu137–Leu157, Val172–His192, Ala211–Leu231, Leu269–Phe289, and Leu339–Gln359.

As to expression, expressed in leaves and at lower levels in roots.

The protein localises to the plastid. It is found in the chloroplast membrane. It carries out the reaction 9,9',15-tri-cis-zeta-carotene = 9,9'-di-cis-zeta-carotene. Its function is as follows. Isomerase involved in the biosynthesis of carotenoids. Catalyzes the cis- to trans-conversion of the 15-cis-bond in 9,15,9'-tri-cis-zeta-carotene. The polypeptide is 15-cis-zeta-carotene isomerase, chloroplastic (Z-ISO) (Arabidopsis thaliana (Mouse-ear cress)).